The following is a 756-amino-acid chain: Cellulose synthase catalytic subunit [UDP-forming] (756 aa).

A run of 4 helical transmembrane segments spans residues 27 to 47, 49 to 69, 106 to 126, and 167 to 187; these read ASYI…TVTL, NNEQ…VGRG, GILG…LFLS, and LTVL…VYIL. The interval 147-242 is catalytic subdomain A; it reads DWPTVDIFIP…YILILDCDHI (96 aa). D189 is an active-site residue. 2 residues coordinate substrate: D238 and D240. The catalytic subdomain B stretch occupies residues 319 to 379; that stretch reads EAIESIGGFA…GQRMRWARGM (61 aa). Residue D335 is part of the active site. 5 consecutive transmembrane segments (helical) span residues 409 to 429, 432 to 452, 470 to 490, 517 to 537, and 551 to 571; these read FFFA…LFAG, IIAA…FHSI, VYET…LLFP, NIIF…ELIV, and LLNC…IAVG. A PilZ domain is found at 576 to 681; it reads QVRYNHRVEA…ERDIVRFVFG (106 aa). The interval 721 to 756 is disordered; sequence NSRPKKKPLALPVERREPTTIHSGQTQEGKISRAAS. The span at 740–756 shows a compositional bias: polar residues; sequence TIHSGQTQEGKISRAAS.

The protein belongs to the glycosyltransferase 2 family. It depends on Mg(2+) as a cofactor.

The protein resides in the cell inner membrane. The catalysed reaction is [(1-&gt;4)-beta-D-glucosyl](n) + UDP-alpha-D-glucose = [(1-&gt;4)-beta-D-glucosyl](n+1) + UDP + H(+). Its pathway is glycan metabolism; bacterial cellulose biosynthesis. Activated by bis-(3'-5') cyclic diguanylic acid (c-di-GMP). Its function is as follows. Catalytic subunit of cellulose synthase. It polymerizes uridine 5'-diphosphate glucose to cellulose. The thick cellulosic mats generated by this enzyme probably provide a specialized protective environment to the bacterium. This Komagataeibacter sucrofermentans (strain ATCC 700178 / DSM 15973 / CECT 7291 / JCM 9730 / LMG 18788 / BPR 2001) (Acetobacter xylinus subsp. sucrofermentans) protein is Cellulose synthase catalytic subunit [UDP-forming] (bcsA).